The chain runs to 143 residues: Large ribosomal subunit protein uL11 (143 aa).

It belongs to the universal ribosomal protein uL11 family. In terms of assembly, part of the ribosomal stalk of the 50S ribosomal subunit. Interacts with L10 and the large rRNA to form the base of the stalk. L10 forms an elongated spine to which L12 dimers bind in a sequential fashion forming a multimeric L10(L12)X complex. In terms of processing, one or more lysine residues are methylated.

Forms part of the ribosomal stalk which helps the ribosome interact with GTP-bound translation factors. In Methylococcus capsulatus (strain ATCC 33009 / NCIMB 11132 / Bath), this protein is Large ribosomal subunit protein uL11.